Consider the following 492-residue polypeptide: Katanin p60 ATPase-containing subunit A1 (492 aa).

Positions P91 to K158 are disordered. A compositionally biased stretch (polar residues) spans L138–V147. Residue G250–T257 coordinates ATP.

This sequence belongs to the AAA ATPase family. Katanin p60 subunit A1 subfamily. As to quaternary structure, can homooligomerize into hexameric rings, which may be promoted by interaction with microtubules. Interacts with katnb1, which may serve as a targeting subunit.

It localises to the cytoplasm. Its subcellular location is the cytoskeleton. The protein resides in the microtubule organizing center. The protein localises to the centrosome. It is found in the spindle pole. It localises to the spindle. The enzyme catalyses n ATP + n H2O + a microtubule = n ADP + n phosphate + (n+1) alpha/beta tubulin heterodimers.. Its activity is regulated as follows. ATPase activity is stimulated by microtubules, which promote homooligomerization. ATP-dependent microtubule severing is stimulated by interaction with katnb1. Its function is as follows. Catalytic subunit of a complex which severs microtubules in an ATP-dependent manner. Microtubule severing may promote rapid reorganization of cellular microtubule arrays and the release of microtubules from the centrosome following nucleation. This is Katanin p60 ATPase-containing subunit A1 (katna1) from Xenopus tropicalis (Western clawed frog).